A 50-amino-acid polypeptide reads, in one-letter code: Large ribosomal subunit protein eL40 (50 aa).

The protein belongs to the eukaryotic ribosomal protein eL40 family.

This is Large ribosomal subunit protein eL40 from Aeropyrum pernix (strain ATCC 700893 / DSM 11879 / JCM 9820 / NBRC 100138 / K1).